Here is a 50-residue protein sequence, read N- to C-terminus: Protein PndA (50 aa).

Residues 5–25 form a helical membrane-spanning segment; the sequence is TFLMMLIVVCVTILCFVWMVR.

This sequence belongs to the Hok/Gef family.

It localises to the cell inner membrane. When overexpressed kill the cells from the inside by interfering with a vital function in the cell membrane. Its function is as follows. Toxic component of a type I toxin-antitoxin (TA) system. When expressed is involved in cellular Mg(2+) release and degradation of stable RNA. The chain is Protein PndA (pndA) from Escherichia coli.